A 1194-amino-acid chain; its full sequence is Immunoglobulin superfamily member 3 (1194 aa).

Positions methionine 1–alanine 19 are cleaved as a signal peptide. Ig-like C2-type domains follow at residues glutamine 20 to asparagine 138, proline 143 to methionine 262, proline 276 to threonine 386, proline 401 to threonine 539, phenylalanine 545 to leucine 661, proline 676 to serine 803, proline 813 to threonine 945, and proline 949 to threonine 1097. Topologically, residues glutamine 20–alanine 1124 are extracellular. Cystine bridges form between cysteine 42–cysteine 120 and cysteine 167–cysteine 246. Asparagine 43 is a glycosylation site (N-linked (GlcNAc...) asparagine). The EWI motif motif lies at glutamate 250–isoleucine 252. Cysteine 302 and cysteine 376 are disulfide-bonded. Asparagine 418 carries N-linked (GlcNAc...) asparagine glycosylation. Cystine bridges form between cysteine 432/cysteine 511 and cysteine 566/cysteine 645. Residue asparagine 655 is glycosylated (N-linked (GlcNAc...) asparagine). 3 disulfide bridges follow: cysteine 701-cysteine 782, cysteine 838-cysteine 918, and cysteine 974-cysteine 1080. A glycan (N-linked (GlcNAc...) asparagine) is linked at asparagine 842. A disordered region spans residues alanine 997–leucine 1033. Positions glutamate 1007–proline 1027 are enriched in acidic residues. N-linked (GlcNAc...) asparagine glycosylation is present at asparagine 1077. A helical membrane pass occupies residues leucine 1125 to leucine 1145. The Cytoplasmic segment spans residues leucine 1146–aspartate 1194.

In terms of tissue distribution, expressed in a wide range of tissues with High expression in Placenta, kidney and lung.

The protein resides in the membrane. The polypeptide is Immunoglobulin superfamily member 3 (IGSF3) (Homo sapiens (Human)).